The chain runs to 711 residues: 1,4-alpha-glucan-branching enzyme (711 aa).

Residues Trp98 and Lys135 each contribute to the (1,4-alpha-D-glucosyl)n site. Catalysis depends on Asp353, which acts as the Nucleophile. Glu414 serves as the catalytic Proton donor.

This sequence belongs to the glycosyl hydrolase 13 family. GlgB subfamily.

The protein resides in the cytoplasm. It catalyses the reaction Transfers a segment of a (1-&gt;4)-alpha-D-glucan chain to a primary hydroxy group in a similar glucan chain.. The protein operates within glycan biosynthesis; glycogen biosynthesis. Its function is as follows. Glycogen-branching enzyme participates in the glycogen biosynthetic process along with glycogenin and glycogen synthase. Generates alpha-1,6-glucosidic branches from alpha-1,4-linked glucose chains, to increase solubility of the glycogen polymer. This chain is 1,4-alpha-glucan-branching enzyme (GLC3), found in Debaryomyces hansenii (strain ATCC 36239 / CBS 767 / BCRC 21394 / JCM 1990 / NBRC 0083 / IGC 2968) (Yeast).